The sequence spans 285 residues: 4-diphosphocytidyl-2-C-methyl-D-erythritol kinase (285 aa).

Lys-12 is a catalytic residue. 95 to 105 contributes to the ATP binding site; the sequence is PVGAGLAGGST. The active site involves Asp-137.

This sequence belongs to the GHMP kinase family. IspE subfamily.

The catalysed reaction is 4-CDP-2-C-methyl-D-erythritol + ATP = 4-CDP-2-C-methyl-D-erythritol 2-phosphate + ADP + H(+). Its pathway is isoprenoid biosynthesis; isopentenyl diphosphate biosynthesis via DXP pathway; isopentenyl diphosphate from 1-deoxy-D-xylulose 5-phosphate: step 3/6. Its function is as follows. Catalyzes the phosphorylation of the position 2 hydroxy group of 4-diphosphocytidyl-2C-methyl-D-erythritol. In Syntrophomonas wolfei subsp. wolfei (strain DSM 2245B / Goettingen), this protein is 4-diphosphocytidyl-2-C-methyl-D-erythritol kinase.